A 300-amino-acid polypeptide reads, in one-letter code: Protoheme IX farnesyltransferase (300 aa).

9 helical membrane passes run 24–44 (VTQLAVFCAVIGMFLATPGMV), 48–68 (VLLGGTIGIGLLAGSAFAINC), 94–114 (LQILAFSTVLGGLGAWTLYTF), 118–138 (LTMWLTIATFVGYAVIYTLLL), 146–166 (IVIGGASGAMPPALGWAAVTG), 172–192 (AWILVLIIFVWTPPHFWVLAL), 217–237 (LHILLYTVILFAVTMMPFISG), 239–259 (SGAVYLTSAVLLGALFLAYAW), and 278–298 (IVYLSLLFAALLVDHYARPVI).

It belongs to the UbiA prenyltransferase family. Protoheme IX farnesyltransferase subfamily.

Its subcellular location is the cell inner membrane. It catalyses the reaction heme b + (2E,6E)-farnesyl diphosphate + H2O = Fe(II)-heme o + diphosphate. It participates in porphyrin-containing compound metabolism; heme O biosynthesis; heme O from protoheme: step 1/1. Converts heme B (protoheme IX) to heme O by substitution of the vinyl group on carbon 2 of heme B porphyrin ring with a hydroxyethyl farnesyl side group. The polypeptide is Protoheme IX farnesyltransferase (Burkholderia pseudomallei (strain 1106a)).